Here is a 117-residue protein sequence, read N- to C-terminus: Large ribosomal subunit protein bL20 (117 aa).

The protein belongs to the bacterial ribosomal protein bL20 family.

Its function is as follows. Binds directly to 23S ribosomal RNA and is necessary for the in vitro assembly process of the 50S ribosomal subunit. It is not involved in the protein synthesizing functions of that subunit. In Wolinella succinogenes (strain ATCC 29543 / DSM 1740 / CCUG 13145 / JCM 31913 / LMG 7466 / NCTC 11488 / FDC 602W) (Vibrio succinogenes), this protein is Large ribosomal subunit protein bL20.